A 369-amino-acid chain; its full sequence is Replication factor C subunit 5 (369 aa).

The disordered stretch occupies residues 21–40; it reads INKGKDVVGFGPPPQSKATP. 79–86 is a binding site for ATP; sequence GPPGTGKT.

This sequence belongs to the activator 1 small subunits family. Heterotetramer of subunits RFC2, RFC3, RFC4 and RFC5 that can form a complex with RFC1.

It is found in the nucleus. Functionally, functions in cell replication and proliferation. May be involved in chromatin assembly and remodeling. Plays a role in the negative control of pathogenesis-related gene expression and systemic acquired resistance (SAR). This is Replication factor C subunit 5 (RFC5) from Arabidopsis thaliana (Mouse-ear cress).